Reading from the N-terminus, the 243-residue chain is Zinc import ATP-binding protein ZnuC (243 aa).

One can recognise an ABC transporter domain in the interval Ile4 to Gly219. Residue Gly36 to Ser43 participates in ATP binding.

It belongs to the ABC transporter superfamily. Zinc importer (TC 3.A.1.15.5) family. In terms of assembly, the complex is composed of two ATP-binding proteins (ZnuC), two transmembrane proteins (ZnuB) and a solute-binding protein (ZnuA).

The protein resides in the cell inner membrane. The enzyme catalyses Zn(2+)(out) + ATP(in) + H2O(in) = Zn(2+)(in) + ADP(in) + phosphate(in) + H(+)(in). In terms of biological role, part of the ABC transporter complex ZnuABC involved in zinc import. Responsible for energy coupling to the transport system. The polypeptide is Zinc import ATP-binding protein ZnuC (Cereibacter sphaeroides (strain ATCC 17023 / DSM 158 / JCM 6121 / CCUG 31486 / LMG 2827 / NBRC 12203 / NCIMB 8253 / ATH 2.4.1.) (Rhodobacter sphaeroides)).